The sequence spans 506 residues: Kynureninase 1 (506 aa).

Pyridoxal 5'-phosphate-binding positions include leucine 141, threonine 142, 169–172 (FPSD), aspartate 254, histidine 257, and tyrosine 279. Residue lysine 280 is modified to N6-(pyridoxal phosphate)lysine. Over residues 303-319 (ETAPTTTPDGTNGNPKT) the composition is skewed to low complexity. A disordered region spans residues 303-322 (ETAPTTTPDGTNGNPKTISD). Pyridoxal 5'-phosphate-binding residues include tryptophan 334 and asparagine 362.

Belongs to the kynureninase family. In terms of assembly, homodimer. Pyridoxal 5'-phosphate serves as cofactor.

The protein localises to the cytoplasm. The catalysed reaction is L-kynurenine + H2O = anthranilate + L-alanine + H(+). The enzyme catalyses 3-hydroxy-L-kynurenine + H2O = 3-hydroxyanthranilate + L-alanine + H(+). It participates in amino-acid degradation; L-kynurenine degradation; L-alanine and anthranilate from L-kynurenine: step 1/1. The protein operates within cofactor biosynthesis; NAD(+) biosynthesis; quinolinate from L-kynurenine: step 2/3. Catalyzes the cleavage of L-kynurenine (L-Kyn) and L-3-hydroxykynurenine (L-3OHKyn) into anthranilic acid (AA) and 3-hydroxyanthranilic acid (3-OHAA), respectively. This chain is Kynureninase 1, found in Phaeosphaeria nodorum (strain SN15 / ATCC MYA-4574 / FGSC 10173) (Glume blotch fungus).